The chain runs to 728 residues: 1,4-alpha-glucan branching enzyme GlgB (728 aa).

D405 (nucleophile) is an active-site residue. E458 (proton donor) is an active-site residue.

It belongs to the glycosyl hydrolase 13 family. GlgB subfamily. In terms of assembly, monomer.

The enzyme catalyses Transfers a segment of a (1-&gt;4)-alpha-D-glucan chain to a primary hydroxy group in a similar glucan chain.. It participates in glycan biosynthesis; glycogen biosynthesis. In terms of biological role, catalyzes the formation of the alpha-1,6-glucosidic linkages in glycogen by scission of a 1,4-alpha-linked oligosaccharide from growing alpha-1,4-glucan chains and the subsequent attachment of the oligosaccharide to the alpha-1,6 position. This chain is 1,4-alpha-glucan branching enzyme GlgB, found in Salmonella paratyphi B (strain ATCC BAA-1250 / SPB7).